A 397-amino-acid polypeptide reads, in one-letter code: Arginine biosynthesis bifunctional protein ArgJ (397 aa).

Positions 143, 169, 180, 266, 392, and 397 each coordinate substrate. The active-site Nucleophile is the T180.

Belongs to the ArgJ family. In terms of assembly, heterotetramer of two alpha and two beta chains.

Its subcellular location is the cytoplasm. The enzyme catalyses N(2)-acetyl-L-ornithine + L-glutamate = N-acetyl-L-glutamate + L-ornithine. The catalysed reaction is L-glutamate + acetyl-CoA = N-acetyl-L-glutamate + CoA + H(+). It functions in the pathway amino-acid biosynthesis; L-arginine biosynthesis; L-ornithine and N-acetyl-L-glutamate from L-glutamate and N(2)-acetyl-L-ornithine (cyclic): step 1/1. It participates in amino-acid biosynthesis; L-arginine biosynthesis; N(2)-acetyl-L-ornithine from L-glutamate: step 1/4. Its activity is regulated as follows. Competitively inhibited by L-ornithine. Catalyzes two activities which are involved in the cyclic version of arginine biosynthesis: the synthesis of N-acetylglutamate from glutamate and acetyl-CoA as the acetyl donor, and of ornithine by transacetylation between N(2)-acetylornithine and glutamate. The protein is Arginine biosynthesis bifunctional protein ArgJ of Thermotoga neapolitana (strain ATCC 49049 / DSM 4359 / NBRC 107923 / NS-E).